The primary structure comprises 235 residues: MNDADVSKQIQQMVRFIRQEAEEKANEISISAEEEFNIERLQLLESAKRKLRQDYDRKLKQVDIRKRIDYSTQLNASRIKYLQAQDDVVTAMKDSAAKDLLRVSNDKNNYKKLLKSLIIESLLRLKEPSVLLRCREMDKKVVESVIEDAKRQYAEKAKVGSPKITIDEKVFLPPPPNPKLPDSHDPHCSGGVVLASQDGKIVCENTLDARLDVAFRQKLPQIRTRLVGAPETSRA.

Met1 bears the N-acetylmethionine mark. Residues 8-64 are a coiled coil; the sequence is KQIQQMVRFIRQEAEEKANEISISAEEEFNIERLQLLESAKRKLRQDYDRKLKQVDI.

It belongs to the V-ATPase E subunit family. V-ATPase is a heteromultimeric enzyme composed of a peripheral catalytic V1 complex (components A to H) attached to an integral membrane V0 proton pore complex (components: a, c, c'', d and e).

It localises to the vacuole membrane. Its function is as follows. Subunit of the peripheral V1 complex of vacuolar ATPase essential for assembly or catalytic function. V-ATPase is responsible for acidifying a variety of intracellular compartments in eukaryotic cells. The protein is V-type proton ATPase subunit E2 (VHA-E2) of Arabidopsis thaliana (Mouse-ear cress).